Here is a 609-residue protein sequence, read N- to C-terminus: Grainyhead-like protein 1 homolog (609 aa).

The transcription activation stretch occupies residues 1–91; the sequence is MTQDYDNKRP…EHDHADHEHS (91 aa). Positions 183–207 are disordered; sequence SDHFTSNNQPPNSQRRTPDSTFSET. The span at 185–206 shows a compositional bias: polar residues; it reads HFTSNNQPPNSQRRTPDSTFSE. One can recognise a Grh/CP2 DB domain in the interval 239-465; sequence AGNNFEYTLE…DLDTQPVLFI (227 aa). Interaction with DNA regions lie at residues 371 to 380 and 418 to 421; these read TDFSSQKGVK and RKIR.

Belongs to the grh/CP2 family. Grainyhead subfamily. In terms of assembly, binds DNA as homodimer.

The protein resides in the nucleus. In terms of biological role, transcription factor involved in epithelial development. Binds directly to the consensus DNA sequence 5'-AACCGGTT-3' and modulates expression of epidermal-specific genes, including XK81A1. Important regulator of DSG1 in the context of epidermal differentiation. Regulates the maintenance of skin barrier. No genetic interaction with GRHL3, nor functional cooperativity due to diverse target gene selectivity during epithelia development. Functions downstream of BMP-signaling cascade modulating endogenous bmp4-responsive targets. This is Grainyhead-like protein 1 homolog from Xenopus laevis (African clawed frog).